A 1489-amino-acid polypeptide reads, in one-letter code: Calmodulin-regulated spectrin-associated protein 2 (1489 aa).

One can recognise a Calponin-homology (CH) domain in the interval 222–335 (WKLVPARYRK…FMAELFWWFE (114 aa)). The tract at residues 375-415 (SSDFPSSGEGATFTQSHHHLPSRYSRPQAHSSASGGIRRSS) is disordered. Low complexity predominate over residues 405-415 (SSASGGIRRSS). Phosphoserine is present on residues Ser416 and Ser418. Position 426 is a phosphothreonine (Thr426). Phosphoserine is present on residues Ser464, Ser598, Ser599, Ser611, and Ser673. Disordered stretches follow at residues 611–639 (SPIT…EDSS) and 668–730 (TREA…GSEL). Residues 668–679 (TREALSPCPSTV) are compositionally biased toward polar residues. Thr678 bears the Phosphothreonine mark. Residue Ser680 is modified to Phosphoserine. Residues 680 to 699 (STKSQPGSSASSSSGVKMTS) show a composition bias toward low complexity. Residues 703-713 (QKFRKLNHTDG) show a composition bias toward basic and acidic residues. Residues 756–793 (LLASEMVHLRMKLEEKRRAIEAQKKKMEAAFTKQRQKM) adopt a coiled-coil conformation. Residues 812-844 (LREEAAGAEDEKVYTDRAKEKESQKTDGQRSKS) are disordered. Ser862 is subject to Phosphoserine. Residues 887–926 (EILEYTKSIEKLNSSLHFLQQEMQRLSLQQEMLMQMREQQ) are a coiled coil. Positions 922–1034 (MREQQSWVIS…IQTRSFVCFG (113 aa)) are MBD region. The segment at 925–1017 (QQSWVISPPQ…SVDSLPRLRR (93 aa)) is disordered. A phosphoserine mark is found at Ser931 and Ser936. Over residues 960–989 (SSDSPRPTHPSPQSSNRKSASFSVKSQRTP) the composition is skewed to polar residues. 3 positions are modified to phosphothreonine: Thr997, Thr1002, and Thr1004. Residues Ser1008 and Ser1019 each carry the phosphoserine modification. 3 disordered regions span residues 1032–1078 (CFGD…PFES), 1096–1152 (PNED…DKEQ), and 1191–1349 (KETQ…EYTG). Over residues 1039 to 1075 (PQLKESKPKEEVKKEELESKGTLEQRGHNPEEKEIKP) the composition is skewed to basic and acidic residues. Pro residues predominate over residues 1105 to 1117 (TEPPPKPVFPPTA). 2 stretches are compositionally biased toward basic and acidic residues: residues 1132 to 1152 (KPPE…DKEQ) and 1191 to 1252 (KETQ…DTVI). The residue at position 1148 (Ser1148) is a Phosphoserine. Positions 1166–1238 (KDDQKAENDM…REFIRQEYMR (73 aa)) form a coiled coil. A compositionally biased stretch (polar residues) spans 1287–1299 (SSLSLASLNTGDN). Residues Ser1313, Ser1319, and Ser1321 each carry the phosphoserine modification. The segment covering 1334 to 1346 (NASTTSSVASGTE) has biased composition (polar residues). In terms of domain architecture, CKK spans 1349–1483 (GPKLYKEPSA…QTKRPVTPKK (135 aa)).

It belongs to the CAMSAP1 family. As to quaternary structure, interacts with CAMSAP3. Interacts with KATNA1 and KATNB1; leading to regulate the length of CAMSAP2-decorated microtubule stretches. Interacts with a complex formed by AKAP9 and PDE4DIP isoform 13/MMG8/SMYLE, which recruits CAMSAP2 to the Golgi. Interacts with MAPRE1/EB1.

It localises to the cytoplasm. Its subcellular location is the cytoskeleton. The protein localises to the golgi apparatus. The protein resides in the cilium basal body. Key microtubule-organizing protein that specifically binds the minus-end of non-centrosomal microtubules and regulates their dynamics and organization. Specifically recognizes growing microtubule minus-ends and autonomously decorates and stabilizes microtubule lattice formed by microtubule minus-end polymerization. Acts on free microtubule minus-ends that are not capped by microtubule-nucleating proteins or other factors and protects microtubule minus-ends from depolymerization. In addition, it also reduces the velocity of microtubule polymerization. Through the microtubule cytoskeleton, also regulates the organization of cellular organelles including the Golgi and the early endosomes. Essential for the tethering, but not for nucleation of non-centrosomal microtubules at the Golgi: together with Golgi-associated proteins AKAP9 and PDE4DIP, required to tether non-centrosomal minus-end microtubules to the Golgi, an important step for polarized cell movement. Also acts as a regulator of neuronal polarity and development: localizes to non-centrosomal microtubule minus-ends in neurons and stabilizes non-centrosomal microtubules, which is required for neuronal polarity, axon specification and dendritic branch formation. Through the microtubule cytoskeleton, regulates the autophagosome transport. This chain is Calmodulin-regulated spectrin-associated protein 2, found in Homo sapiens (Human).